The primary structure comprises 403 residues: MTTEIKVERGLFDEVMVPCYNPMEMIPVRGKGSRIWDQDDNEYIDFAGGIAVSCLGHCHPVMVDALTEQGNKLWHLSNVMTNEPALRLAKKLTEVSFAERVFFANSGAEANEAALKLARRYAADVHGPEKSEIIAFKQGFHGRTFFTVTVGGQAAYSDGFGPKPGDVTHLPYNDIEALQAHMSDRTCAVMMEPLQGEGGIVPPTPEFAQAVRELCDKHNALLIFDEVQTGNGRTGHFYAYQGLGITPDILSTAKSLGGGFPIGAMLTTAKLAEHLKVGTHGSTYGGNPLACAVAEAVVNEVTKPEVLAGVLEREALFRAGLEKINAKYNLFSEVRGKGLLLGAALNEEWQGRARDVLVAAGKQGLLVLVAGANVVRFTPSLVITQQEIEEGLAKLDKAIATLV.

Residues 107 to 108 (GA) and F140 contribute to the pyridoxal 5'-phosphate site. R143 is a binding site for N(2)-acetyl-L-ornithine. Residue 225-228 (DEVQ) participates in pyridoxal 5'-phosphate binding. K254 carries the N6-(pyridoxal phosphate)lysine modification. S282 is a binding site for N(2)-acetyl-L-ornithine. T283 contributes to the pyridoxal 5'-phosphate binding site.

Belongs to the class-III pyridoxal-phosphate-dependent aminotransferase family. ArgD subfamily. As to quaternary structure, homodimer. Pyridoxal 5'-phosphate serves as cofactor.

It localises to the cytoplasm. It carries out the reaction N(2)-acetyl-L-ornithine + 2-oxoglutarate = N-acetyl-L-glutamate 5-semialdehyde + L-glutamate. It participates in amino-acid biosynthesis; L-arginine biosynthesis; N(2)-acetyl-L-ornithine from L-glutamate: step 4/4. The polypeptide is Acetylornithine aminotransferase (Vibrio parahaemolyticus serotype O3:K6 (strain RIMD 2210633)).